The following is an 848-amino-acid chain: Dynein axonemal intermediate chain 4 (848 aa).

Disordered stretches follow at residues 345–370 (SKAN…SETS) and 431–464 (EPEP…IHAE). Over residues 359 to 370 (PGSTTEKNSETS) the composition is skewed to polar residues. A compositionally biased stretch (basic and acidic residues) spans 442–456 (ESAKHEEVEEESKKE). WD repeat units lie at residues 534 to 574 (QSPY…NVPV), 583 to 631 (KHLG…DCYD), 658 to 698 (SRQA…QYLD), 702 to 742 (GHKG…PSLS), 745 to 784 (PATS…LDPL), and 790 to 829 (NPGI…TVLE).

As to quaternary structure, part of the multisubunit axonemal dynein complex formed at least of two heavy chains and a number of intermediate and light chains. Associated with axonemal dynein subunits such as, DNAH2, DNAI3, and DYNLT1. Interacts with DYNLT1.

It localises to the cytoplasm. Its subcellular location is the cytoskeleton. The protein resides in the flagellum axoneme. The protein localises to the cilium axoneme. It is found in the dynein axonemal particle. In terms of biological role, plays a critical role in the assembly of axonemal dynein complex, thereby playing a role in ciliary motility. The polypeptide is Dynein axonemal intermediate chain 4 (Homo sapiens (Human)).